Consider the following 530-residue polypeptide: MPGKWISALLLLQISCCFRSVKCGKVLVWPMEFSHWMNIKIILDELVQRGHEVTVLRPSAYYVLDPKKSPGLKFETFPTSVSKDNLENFFIKFVDVWTYEMPRDTCLSYSPLLQNMIDEFSDYFLSLCKDVVSNKELMTKLQESKFDVLLSDPVASCGELIAELLQIPFLYSIRFSPGYQIEKSSGRFLLPPSYVPVILSGLGGQMTFIERIKNMICMLYFDFWFQMFNDKKWDSFYSEYLGRPTTLVETMGQAEMWLIRSNWDLEFPHPTLPNVDYVGGLHCKPAKPLPKDMEEFVQSSGDHGVVVFSLGSMVSNMTEEKANAIAWALAQIPQKVLWKFDGKTPATLGHNTRVYKWLPQNDLLGHPKTKAFVTHGGANGVYEAIYHGIPMIGIPLFGEQHDNIAHMVAKGAAVALNIRTMSKSDVLNALEEVIENPFYKKNAIWLSTIHHDQPMKPLDRAVFWIEFVMRHKRAKHLRPLGHNLTWYQYHSLDVIGFLLSCVATTIVLSVKCLLFIYRFFVKKENKMKNE.

The signal sequence occupies residues 1-23 (MPGKWISALLLLQISCCFRSVKC). N-linked (GlcNAc...) asparagine glycosylation is found at asparagine 316 and asparagine 483. A helical transmembrane segment spans residues 494-510 (VIGFLLSCVATTIVLSV).

It belongs to the UDP-glycosyltransferase family.

The protein resides in the endoplasmic reticulum membrane. The catalysed reaction is glucuronate acceptor + UDP-alpha-D-glucuronate = acceptor beta-D-glucuronoside + UDP + H(+). The enzyme catalyses 17alpha-estradiol + UDP-alpha-D-glucuronate = 17alpha-estradiol 3-O-(beta-D-glucuronate) + UDP + H(+). It carries out the reaction 17alpha-estradiol + UDP-alpha-D-glucuronate = 17alpha-estradiol 17-O-(beta-D-glucuronate) + UDP + H(+). It catalyses the reaction 17beta-estradiol + UDP-alpha-D-glucuronate = 17beta-estradiol 17-O-(beta-D-glucuronate) + UDP + H(+). The catalysed reaction is 17beta-hydroxy-5alpha-androstan-3-one + UDP-alpha-D-glucuronate = 5alpha-dihydrotestosterone 17-O-(beta-D-glucuronate) + UDP + H(+). The enzyme catalyses testosterone + UDP-alpha-D-glucuronate = testosterone 17-O-(beta-D-glucuronate) + UDP + H(+). UDP-glucuronosyltransferase (UGT) that catalyzes phase II biotransformation reactions in which lipophilic substrates are conjugated with glucuronic acid to increase the metabolite's water solubility, thereby facilitating excretion into either the urine or bile. Catalyzes the glucuronidation of endogenous steroid hormones such as androgens (epitestosterone, androsterone) and estrogens (estradiol, epiestradiol). The protein is UDP-glucuronosyltransferase 2B17 of Mus musculus (Mouse).